The chain runs to 240 residues: Orotidine 5'-phosphate decarboxylase (240 aa).

Substrate is bound by residues D15, K37, 64 to 73 (DLKYHDIPNT), T127, R188, Q197, G217, and R218. Catalysis depends on K66, which acts as the Proton donor.

The protein belongs to the OMP decarboxylase family. Type 1 subfamily. In terms of assembly, homodimer.

It carries out the reaction orotidine 5'-phosphate + H(+) = UMP + CO2. It participates in pyrimidine metabolism; UMP biosynthesis via de novo pathway; UMP from orotate: step 2/2. Its function is as follows. Catalyzes the decarboxylation of orotidine 5'-monophosphate (OMP) to uridine 5'-monophosphate (UMP). This Geobacter sp. (strain M21) protein is Orotidine 5'-phosphate decarboxylase.